Reading from the N-terminus, the 772-residue chain is General transcription and DNA repair factor IIH helicase subunit XPD (772 aa).

One can recognise a Helicase ATP-binding domain in the interval Asp-7–Glu-283. Residue Met-42 to Thr-49 coordinates ATP. The [4Fe-4S] cluster site is built by Cys-115, Cys-133, Cys-154, and Cys-189. The DEAH box motif lies at Asp-233 to His-236.

This sequence belongs to the helicase family. RAD3/XPD subfamily. In terms of assembly, component of the 7-subunit TFIIH core complex composed of XPB/ptr8, XPD/rad15, ssl1, tfb1, tfb2, tfb4 and tfb5, which is active in NER. The core complex associates with the 3-subunit CTD-kinase module TFIIK composed of mcs2/cyclin H, mcs6/cdk7 and pmh1/tfb3 to form the 10-subunit holoenzyme (holo-TFIIH) active in transcription. [4Fe-4S] cluster serves as cofactor.

The protein localises to the nucleus. The catalysed reaction is Couples ATP hydrolysis with the unwinding of duplex DNA at the replication fork by translocating in the 5'-3' direction. This creates two antiparallel DNA single strands (ssDNA). The leading ssDNA polymer is the template for DNA polymerase III holoenzyme which synthesizes a continuous strand.. It carries out the reaction ATP + H2O = ADP + phosphate + H(+). In terms of biological role, ATP-dependent 5'-3' DNA helicase, component of the general transcription and DNA repair factor IIH (TFIIH) core complex, which is involved in general and transcription-coupled nucleotide excision repair (NER) of damaged DNA and, when complexed to TFIIK, in RNA transcription by RNA polymerase II. In NER, TFIIH acts by opening DNA around the lesion to allow the excision of the damaged oligonucleotide and its replacement by a new DNA fragment. The ATP-dependent helicase activity of XPD/rad15 is required for DNA opening. In transcription, TFIIH has an essential role in transcription initiation. When the pre-initiation complex (PIC) has been established, TFIIH is required for promoter opening and promoter escape. Phosphorylation of the C-terminal tail (CTD) of the largest subunit of RNA polymerase II by the kinase module TFIIK controls the initiation of transcription. XPD/rad15 acts by forming a bridge between TFIIK and the core-TFIIH complex. Involved in the maintenance of the fidelity of DNA replication. The chain is General transcription and DNA repair factor IIH helicase subunit XPD from Schizosaccharomyces pombe (strain 972 / ATCC 24843) (Fission yeast).